The primary structure comprises 232 residues: Proteasome subunit alpha type-2 (232 aa).

Belongs to the peptidase T1A family. In terms of assembly, the 26S proteasome consists of a 20S proteasome core and two 19S regulatory subunits. The 20S proteasome core is composed of 28 subunits that are arranged in four stacked rings, resulting in a barrel-shaped structure. The two end rings are each formed by seven alpha subunits, and the two central rings are each formed by seven beta subunits. The catalytic chamber with the active sites is on the inside of the barrel.

It is found in the cytoplasm. The protein localises to the nucleus. Its function is as follows. The proteasome is a multicatalytic proteinase complex which is characterized by its ability to cleave peptides with Arg, Phe, Tyr, Leu, and Glu adjacent to the leaving group at neutral or slightly basic pH. The proteasome has an ATP-dependent proteolytic activity. The chain is Proteasome subunit alpha type-2 (psmA2) from Dictyostelium discoideum (Social amoeba).